The chain runs to 578 residues: Zinc finger-containing ubiquitin peptidase 1 (578 aa).

The C2H2-type 1 zinc finger occupies 2–24 (LSCDICGETVTSEPDMKAHLIVH). Residues 29–52 (IVCPFCKLSGVSYDEMCFHIETAH) form a C2H2-type 2; atypical zinc finger. C2H2-type zinc fingers lie at residues 154 to 177 (PECP…KTTH) and 193 to 215 (YDCP…VDLH). An MIU region spans residues 226–248 (DRVQCSGDLQLAHQLQQEEDRKR). Residues 249 to 274 (RSEESRQEIEEFQKLQRQYGLDNSGG) are zUBD/ZHA. Residue Lys-262 is modified to N6-acetyllysine. The Nucleophile role is filled by Cys-360. Catalysis depends on His-491, which acts as the Proton acceptor. Residue Asp-512 is part of the active site.

Belongs to the peptidase C78 family. ZUFSP subfamily. Interacts with RPA1 and RPA2.

The protein localises to the cytoplasm. It localises to the nucleus. It catalyses the reaction Thiol-dependent hydrolysis of ester, thioester, amide, peptide and isopeptide bonds formed by the C-terminal Gly of ubiquitin (a 76-residue protein attached to proteins as an intracellular targeting signal).. In terms of biological role, deubiquitinase with endodeubiquitinase activity that specifically interacts with and cleaves 'Lys-63'-linked long polyubiquitin chains. Shows only weak activity against 'Lys-11' and 'Lys-48'-linked chains. Plays an important role in genome stability pathways, functioning to prevent spontaneous DNA damage and also promote cellular survival in response to exogenous DNA damage. Modulates the ubiquitination status of replication protein A (RPA) complex proteins in response to replication stress. In Macaca fascicularis (Crab-eating macaque), this protein is Zinc finger-containing ubiquitin peptidase 1.